A 486-amino-acid polypeptide reads, in one-letter code: Mogroside I-E synthase (486 aa).

Residues serine 302, cysteine 360, glutamine 362, tryptophan 380, asparagine 381, serine 382, glutamate 385, aspartate 401, and glutamine 402 each contribute to the UDP-alpha-D-glucose site.

Belongs to the UDP-glycosyltransferase family. In terms of tissue distribution, highly expressed in young fruits 15 days after anthesis (15-DAA).

It carries out the reaction mogrol + UDP-alpha-D-glucose = mogroside IE + UDP + H(+). The catalysed reaction is mogroside I-A1 + UDP-alpha-D-glucose = mogroside IIE + UDP + H(+). It catalyses the reaction mogroside II-A1 + UDP-alpha-D-glucose = mogroside IIIX + UDP + H(+). The enzyme catalyses mogroside II-A + UDP-alpha-D-glucose = mogroside III + UDP + H(+). It functions in the pathway secondary metabolite biosynthesis; terpenoid biosynthesis. Functionally, UDP-glycosyltransferase involved in the biosynthesis of cucurbitacin and mogroside tetracyclic triterpene natural products (e.g. siamenoside I and mogrosides IV, V and VI). Cucurbitacins have cytotoxic properties and exhibit deterrent taste as a defense barrier against herbivores. Mogrosides are nonsugar highly oxygenated compounds used as high-intensity zero-calorie sweeteners; they also possess pharmacological properties such as regulating immunity, lowering blood sugar and lipid levels, protecting the liver, and acting as antioxidants and antitumor agents. Catalyzes the C3 primary glucosylation of mogrol, mogroside I-A1, mogroside II-A1 and mogroside II-A. The sequence is that of Mogroside I-E synthase from Siraitia grosvenorii (Monk's fruit).